A 762-amino-acid chain; its full sequence is MASNERDAISWYQKKIGAYDQQIWEKSIEQTQIKGFKNKPKKMGHIKPDLIDVDLIRGSTFAKAKPEIPWTSLTRKGLVRVVFFPLFSSWWIQVTSLRIFVWLLLLYLMQVTAIVLYLMMPIVSVSEVLGPLCLMLLMGTVHCQIVSTQITRPSGNNGNRRRRKLRKTVNGDGTRDNGNNSPDKIRAVETLDSAPSVGGFWGTLFGNRIKRVKLVSNKGTETDNDSGCFHPIIKKRQGRPEIRMWQAREKAKVSDGEKCRREAYRRLGNGVSDDLSSEEDGEARTQMILLRRSVEGASSDNGCEVKNRKSILSRHLNSQVKKTATRWCHIVRDSDSLAESEFESAAFSQGSRSGMSGGSRSLNLSRRDSESTRHDSETEDMLWDDLLHGPECRSSVTSDSEGAHVNTLHSGTKRDPKEDVFQQNHLFWLQNSSPASERVSAIIWEGNECKKMDMSVLEISGIIMSRVNAYEQGVGYQMLGNAVTIGLALFPFLYRLFREKSFDQLKSISAEEVLTLFCGAPPVTPVVILSIINFFERLCLTWIFFFMMCVAERTYKQRFLFAKLFSHITSARKARKYEIPHFRLKKVENIKIWLSLRSYLKRRGPQRSVDVVVSSVFLLTLSIAFICCAQVLQGHKTFLNDAYNWEFLIWETALLLFLLRLASLGSETNKKYSNVSILLTEQINLYLKMEKKPNKKEQLTLVNNVLKLSTKLLKELDTPFRLYGLTMNPLIYNITRVVILSAVSGVISDLLGFNIRLWKIKS.

The PHTF domain occupies 6-150 (RDAISWYQKK…VHCQIVSTQI (145 aa)). 3 consecutive transmembrane segments (helical) span residues 77-97 (GLVRVVFFPLFSSWWIQVTSL), 99-119 (IFVWLLLLYLMQVTAIVLYLM), and 121-141 (PIVSVSEVLGPLCLMLLMGTV). A disordered region spans residues 152-184 (RPSGNNGNRRRRKLRKTVNGDGTRDNGNNSPDK). 2 N-linked (GlcNAc...) asparagine glycosylation sites follow: N179 and N224. A phosphoserine mark is found at S272, S276, S277, S334, and S336. A disordered region spans residues 345–415 (AAFSQGSRSG…NTLHSGTKRD (71 aa)). The segment covering 348–364 (SQGSRSGMSGGSRSLNL) has biased composition (low complexity). N363 carries an N-linked (GlcNAc...) asparagine glycan. The segment covering 365 to 376 (SRRDSESTRHDS) has biased composition (basic and acidic residues). An N-linked (GlcNAc...) asparagine glycan is attached at N431. 4 helical membrane-spanning segments follow: residues 473 to 493 (GVGYQMLGNAVTIGLALFPFL), 515 to 535 (TLFCGAPPVTPVVILSIINFF), 611 to 631 (VVVSSVFLLTLSIAFICCAQV), and 645 to 665 (WEFLIWETALLLFLLRLASLG). 2 N-linked (GlcNAc...) asparagine glycosylation sites follow: N674 and N733. The helical transmembrane segment at 737–757 (VVILSAVSGVISDLLGFNIRL) threads the bilayer.

In terms of assembly, interacts with FEM1B. Highly expressed in testis.

The protein resides in the endoplasmic reticulum membrane. The protein localises to the golgi apparatus. It is found in the cis-Golgi network membrane. The chain is Protein PHTF1 from Rattus norvegicus (Rat).